We begin with the raw amino-acid sequence, 454 residues long: Tubulin gamma chain (454 aa).

142–148 (AGGTGSG) contributes to the GTP binding site.

The protein belongs to the tubulin family.

The protein resides in the cytoplasm. Its subcellular location is the cytoskeleton. It localises to the microtubule organizing center. The protein localises to the spindle pole body. In terms of biological role, tubulin is the major constituent of microtubules. The gamma chain is found at microtubule organizing centers (MTOC) such as the spindle pole or the centrosome, suggesting that it is involved in the minus-end nucleation of microtubule assembly. Interacts physically with beta-tubulin and is involved in microtubule function. The chain is Tubulin gamma chain (mipA) from Emericella nidulans (strain FGSC A4 / ATCC 38163 / CBS 112.46 / NRRL 194 / M139) (Aspergillus nidulans).